A 424-amino-acid chain; its full sequence is Protein SamB (424 aa).

The region spanning 2–189 (FALADVNSFY…QPVEEIWGVG (188 aa)) is the UmuC domain.

This sequence belongs to the DNA polymerase type-Y family.

Its function is as follows. Involved in UV protection and mutation. The polypeptide is Protein SamB (samB) (Salmonella typhimurium).